The sequence spans 30 residues: Cycloviolacin-H3 (30 aa).

Residues 1–30 (GLPVCGETCFGGTCNTPGCICDPWPVCTRN) constitute a cross-link (cyclopeptide (Gly-Asn)). 3 disulfides stabilise this stretch: cysteine 5/cysteine 19, cysteine 9/cysteine 21, and cysteine 14/cysteine 27.

This is a cyclic peptide.

Functionally, probably participates in a plant defense mechanism. The sequence is that of Cycloviolacin-H3 from Viola hederacea (Australian violet).